The following is a 545-amino-acid chain: Probable acyl-activating enzyme 4 (545 aa).

Belongs to the ATP-dependent AMP-binding enzyme family. Expressed in roots, leaves, stems, flowers and developing seeds.

Its function is as follows. May act as an acid--thiol ligase that activates carboxylic acids by forming acyl-CoAs. This chain is Probable acyl-activating enzyme 4 (AEE4), found in Arabidopsis thaliana (Mouse-ear cress).